The sequence spans 431 residues: MTQLKQARKGIVTPEMEAVAKTEGLQPEFILKGIADGNIVIPVNKLRKNLKLCGIGKGLSTKVNANIGTSTDFGSVASEVEKLKMAEMVGADTIMDLSTGPKINTIRKAILENTCLPLGTVPVYQAAVEAKDRYGAMVKMTADDLFGAIESQAREGVDFVTVHCGVTRQVIDTFKGQGRLTDIVSRGGTFTAGWMVFHGAENPLYEHFDRLLDICREYDVTLSLGDGLRPGCIADATDRAQVAELLVLGELVKRAREAEVQVMVEGPGHVPLNQIEANVRLQKSICEDAPFYVLGPLVTDIAPGYDHITGAIGGAIAAAAGADFLCYVTPAEHLSLPDVTDVRNGVIASRIAAHAADIVKGVNGAAERDRQMAIARKKLDWETQLKLSLDPEHARVTRDRFKTRGKACSMCGDFCAMELAEKHLGVSVSRC.

Residues Asn66, Met95, Tyr124, His163, 185–187 (SRG), 226–229 (DGLR), and Glu265 each bind substrate. His269 is a Zn(2+) binding site. Residue Tyr292 coordinates substrate. A Zn(2+)-binding site is contributed by His333. 3 residues coordinate [4Fe-4S] cluster: Cys408, Cys411, and Cys415.

It belongs to the ThiC family. [4Fe-4S] cluster is required as a cofactor.

The enzyme catalyses 5-amino-1-(5-phospho-beta-D-ribosyl)imidazole + S-adenosyl-L-methionine = 4-amino-2-methyl-5-(phosphooxymethyl)pyrimidine + CO + 5'-deoxyadenosine + formate + L-methionine + 3 H(+). It participates in cofactor biosynthesis; thiamine diphosphate biosynthesis. Functionally, catalyzes the synthesis of the hydroxymethylpyrimidine phosphate (HMP-P) moiety of thiamine from aminoimidazole ribotide (AIR) in a radical S-adenosyl-L-methionine (SAM)-dependent reaction. The polypeptide is Phosphomethylpyrimidine synthase (Dehalococcoides mccartyi (strain ATCC BAA-2100 / JCM 16839 / KCTC 5957 / BAV1)).